We begin with the raw amino-acid sequence, 715 residues long: Polyribonucleotide nucleotidyltransferase (715 aa).

Residues aspartate 490 and aspartate 496 each contribute to the Mg(2+) site. A KH domain is found at 557–616; the sequence is PRIETMTIPTDKIREVIGSGGKVIREIVETSGAKVDISDDGTIKIASANADSIKKAYDMI. In terms of domain architecture, S1 motif spans 626-694; sequence GKIYVGKVVK…DRGKVRLGMK (69 aa).

Belongs to the polyribonucleotide nucleotidyltransferase family. It depends on Mg(2+) as a cofactor.

The protein localises to the cytoplasm. The enzyme catalyses RNA(n+1) + phosphate = RNA(n) + a ribonucleoside 5'-diphosphate. In terms of biological role, involved in mRNA degradation. Catalyzes the phosphorolysis of single-stranded polyribonucleotides processively in the 3'- to 5'-direction. This is Polyribonucleotide nucleotidyltransferase from Paracoccus denitrificans (strain Pd 1222).